The sequence spans 1653 residues: Protein TOPAZ1 (1653 aa).

Disordered stretches follow at residues 1-94 (MRPP…TDLV), 284-303 (YSVEENNTGRKHRKKMKSGK), and 415-442 (ISSTVKSPSDGHHMEKRSPRGDLRSETE). Positions 63–78 (GREETEGDKLAKENGK) are enriched in basic and acidic residues. The segment covering 423–442 (SDGHHMEKRSPRGDLRSETE) has biased composition (basic and acidic residues).

As to expression, restricted to testis, where it localizes to germ cells.

Its subcellular location is the cytoplasm. It localises to the cytosol. Functionally, important for normal spermatogenesis and male fertility. Specifically required for progression to the post-meiotic stages of spermatocyte development. Seems to be necessary for normal expression levels of a number of testis-expressed gene transcripts, although its role in this process is unclear. In Mus musculus (Mouse), this protein is Protein TOPAZ1.